The primary structure comprises 145 residues: Trafficking protein particle complex subunit 1 (145 aa).

It belongs to the TRAPP small subunits family. BET5 subfamily. In terms of assembly, part of the multisubunit transport protein particle (TRAPP) complex. The heterodimer TRAPPC6B-TRAPPC3 interacts with TRAPPC1 likely providing a core for TRAPP complex formation.

It localises to the golgi apparatus. The protein localises to the cis-Golgi network. Its subcellular location is the endoplasmic reticulum. May play a role in vesicular transport from endoplasmic reticulum to Golgi. The polypeptide is Trafficking protein particle complex subunit 1 (TRAPPC1) (Bos taurus (Bovine)).